Reading from the N-terminus, the 590-residue chain is Mitochondrial distribution and morphology protein 34 (590 aa).

The region spanning 1 to 225 (MSFIFNRETF…LPSVIFNMSQ (225 aa)) is the SMP-LTD domain. The segment covering 393–405 (RRKIKMRSRKPSK) has biased composition (basic residues). The segment at 393–456 (RRKIKMRSRK…APEGGPNAED (64 aa)) is disordered. The span at 413–427 (PAQNDSGTSSCSNVA) shows a compositional bias: polar residues.

This sequence belongs to the MDM34 family. Component of the ER-mitochondria encounter structure (ERMES) or MDM complex, composed of MMM1, MDM10, MDM12 and MDM34.

It localises to the mitochondrion outer membrane. Functionally, component of the ERMES/MDM complex, which serves as a molecular tether to connect the endoplasmic reticulum (ER) and mitochondria. Components of this complex are involved in the control of mitochondrial shape and protein biogenesis, and function in nonvesicular lipid trafficking between the ER and mitochondria. MDM34 is required for the interaction of the ER-resident membrane protein MMM1 and the outer mitochondrial membrane-resident beta-barrel protein MDM10. In Eremothecium gossypii (strain ATCC 10895 / CBS 109.51 / FGSC 9923 / NRRL Y-1056) (Yeast), this protein is Mitochondrial distribution and morphology protein 34.